A 270-amino-acid chain; its full sequence is UPF0354 protein BCG9842_B0431 (270 aa).

Belongs to the UPF0354 family.

This is UPF0354 protein BCG9842_B0431 from Bacillus cereus (strain G9842).